The following is a 434-amino-acid chain: Elongation factor 1-alpha (434 aa).

The 228-residue stretch at 5–232 (KPHINLVVIG…DNVHPPKRPV (228 aa)) folds into the tr-type G domain. Positions 14–21 (GHVVAGKS) are G1. 14–21 (GHVVAGKS) contributes to the GTP binding site. The G2 stretch occupies residues 70 to 74 (GITID). Residues 91-94 (DAPG) are G3. Residues 91–95 (DAPGH) and 153–156 (NKMD) each bind GTP. The tract at residues 153-156 (NKMD) is G4. Residues 196–198 (SGF) are G5.

Belongs to the TRAFAC class translation factor GTPase superfamily. Classic translation factor GTPase family. EF-Tu/EF-1A subfamily.

The protein resides in the cytoplasm. Functionally, this protein promotes the GTP-dependent binding of aminoacyl-tRNA to the A-site of ribosomes during protein biosynthesis. This chain is Elongation factor 1-alpha, found in Blastocystis hominis.